The sequence spans 399 residues: Cytohesin-3 (399 aa).

Residues 14-61 (EDLSLEEREELLDIRRRKKELIDDIERLKYEIAEVMTEIDNLTSVEES) are a coiled coil. The region spanning 77–206 (FNMDPKKGIQ…IIMLNTSLHN (130 aa)) is the SEC7 domain. Positions 264–380 (NPDREGWLLK…WMKSIKASIS (117 aa)) constitute a PH domain. A 1,2-diacyl-sn-glycero-3-phospho-(1D-myo-inositol-3,4,5-trisphosphate)-binding positions include 273–280 (KLGGRVKT), R284, Y295, R305, and N354. Positions 391-399 (RKRRIANKK) are C-terminal autoinhibitory region.

Interacts with TAMALIN. Interacts with FRMD4A. Interacts with FRMD4B.

Its subcellular location is the cytoplasm. The protein localises to the cytosol. The protein resides in the cell membrane. It localises to the cell junction. It is found in the adherens junction. Its subcellular location is the tight junction. In terms of biological role, promotes guanine-nucleotide exchange on ARF1. Promotes the activation of ARF factors through replacement of GDP with GTP. Plays a role in the epithelial polarization. The sequence is that of Cytohesin-3 (Cyth3) from Mus musculus (Mouse).